Here is a 129-residue protein sequence, read N- to C-terminus: Iron-sulfur cluster assembly 1 homolog, mitochondrial (129 aa).

The N-terminal 12 residues, 1-12 (MSASIARATVRA), are a transit peptide targeting the mitochondrion. Residues Cys57, Cys121, and Cys123 each coordinate Fe cation.

It belongs to the HesB/IscA family.

The protein localises to the mitochondrion. Involved in the maturation of mitochondrial 4Fe-4S proteins functioning late in the iron-sulfur cluster assembly pathway. Probably involved in the binding of an intermediate of Fe/S cluster assembly. In Danio rerio (Zebrafish), this protein is Iron-sulfur cluster assembly 1 homolog, mitochondrial (isca1).